The chain runs to 808 residues: Homeobox-leucine zipper protein HDG1 (808 aa).

Positions 57–121 (LQTNGEMSRN…KRYHRHTPKQ (65 aa)) are disordered. The span at 79–90 (SRGEDVESRSES) shows a compositional bias: basic and acidic residues. Residues 108-119 (LKKKKRYHRHTP) are compositionally biased toward basic residues. Positions 110-169 (KKKRYHRHTPKQIQDLESVFKECAHPDEKQRLDLSRRLNLDPRQVKFWFQNRRTQMKTQI) form a DNA-binding region, homeobox. A coiled-coil region spans residues 158–233 (FQNRRTQMKT…SRLKDELDRV (76 aa)). Residues 310–541 (DFDQRSRYLD…LQRQCECLTI (232 aa)) enclose the START domain.

The protein belongs to the HD-ZIP homeobox family. Class IV subfamily. Interacts with CFL1. Binds with BBM. As to expression, expressed in trichomes forming at the base of young leaves, in endodermal cell lines around emergent lateral roots and in the epidermal layer of the stamen filament.

It localises to the nucleus. In terms of biological role, probable transcription factor. Promotes cuticle development probably by modulating the expression of the downstream genes BDG and FDH, possibly repressed in a CFL1-dependent manner. Involved, together with PDF2, in the regulation of flower organs development by promoting the expression of APETALA 3 (AP3) in the epidermis and internal cell layers of developing flowers. In opposition to BBM, seems to promote cell differentiation and giant cell identity via transcriptional repression of meristem and cell proliferation genes. This is Homeobox-leucine zipper protein HDG1 from Arabidopsis thaliana (Mouse-ear cress).